The chain runs to 485 residues: Aspartyl/glutamyl-tRNA(Asn/Gln) amidotransferase subunit B (485 aa).

It belongs to the GatB/GatE family. GatB subfamily. In terms of assembly, heterotrimer of A, B and C subunits.

The enzyme catalyses L-glutamyl-tRNA(Gln) + L-glutamine + ATP + H2O = L-glutaminyl-tRNA(Gln) + L-glutamate + ADP + phosphate + H(+). It carries out the reaction L-aspartyl-tRNA(Asn) + L-glutamine + ATP + H2O = L-asparaginyl-tRNA(Asn) + L-glutamate + ADP + phosphate + 2 H(+). Its function is as follows. Allows the formation of correctly charged Asn-tRNA(Asn) or Gln-tRNA(Gln) through the transamidation of misacylated Asp-tRNA(Asn) or Glu-tRNA(Gln) in organisms which lack either or both of asparaginyl-tRNA or glutaminyl-tRNA synthetases. The reaction takes place in the presence of glutamine and ATP through an activated phospho-Asp-tRNA(Asn) or phospho-Glu-tRNA(Gln). This chain is Aspartyl/glutamyl-tRNA(Asn/Gln) amidotransferase subunit B, found in Rhodospirillum rubrum (strain ATCC 11170 / ATH 1.1.1 / DSM 467 / LMG 4362 / NCIMB 8255 / S1).